The sequence spans 283 residues: Elongation factor Ts (283 aa).

Residues 80–83 (TDFV) form an involved in Mg(2+) ion dislocation from EF-Tu region.

Belongs to the EF-Ts family.

The protein resides in the cytoplasm. Functionally, associates with the EF-Tu.GDP complex and induces the exchange of GDP to GTP. It remains bound to the aminoacyl-tRNA.EF-Tu.GTP complex up to the GTP hydrolysis stage on the ribosome. The sequence is that of Elongation factor Ts from Shigella boydii serotype 18 (strain CDC 3083-94 / BS512).